The sequence spans 297 residues: Polyamine aminopropyltransferase 2 (297 aa).

The region spanning phenylalanine 26 to lysine 258 is the PABS domain. Glutamine 53 is an S-methyl-5'-thioadenosine binding site. Spermidine contacts are provided by histidine 84 and glutamate 108. S-methyl-5'-thioadenosine contacts are provided by residues aspartate 128 and aspartate 157–valine 158. The Proton acceptor role is filled by aspartate 176. Proline 184 lines the S-methyl-5'-thioadenosine pocket.

The protein belongs to the spermidine/spermine synthase family. In terms of assembly, homodimer or homotetramer.

The protein resides in the cytoplasm. The enzyme catalyses S-adenosyl 3-(methylsulfanyl)propylamine + putrescine = S-methyl-5'-thioadenosine + spermidine + H(+). Its pathway is amine and polyamine biosynthesis; spermidine biosynthesis; spermidine from putrescine: step 1/1. Functionally, catalyzes the irreversible transfer of a propylamine group from the amino donor S-adenosylmethioninamine (decarboxy-AdoMet) to putrescine (1,4-diaminobutane) to yield spermidine. The sequence is that of Polyamine aminopropyltransferase 2 from Caldanaerobacter subterraneus subsp. tengcongensis (strain DSM 15242 / JCM 11007 / NBRC 100824 / MB4) (Thermoanaerobacter tengcongensis).